Consider the following 77-residue polypeptide: Putative defensin-like protein 60 (77 aa).

The N-terminal stretch at 1–25 is a signal peptide; the sequence is MKMNITKSYVILFLVVVMTNSLSNS. Disulfide bonds link C41–C75, C45–C68, C54–C73, and C58–C74.

Belongs to the DEFL family.

It localises to the secreted. The polypeptide is Putative defensin-like protein 60 (Arabidopsis thaliana (Mouse-ear cress)).